The sequence spans 178 residues: CASP-like protein 4D1 (178 aa).

Topologically, residues 1 to 14 are cytoplasmic; sequence MAPPPPSPPSVTLR. Residues 15–35 form a helical membrane-spanning segment; the sequence is TVLLLLRVLTAAFLVITVVLI. Residues 36 to 60 lie on the Extracellular side of the membrane; the sequence is STNTVTLEVSSTSIKMRFNDVYAYR. A helical membrane pass occupies residues 61 to 81; sequence YMLSAAVIGLLYAVVQLFLTI. Residues 82 to 149 are Cytoplasmic-facing; sequence SQFATGTTHP…KFFSKGYASA (68 aa). A helical transmembrane segment spans residues 150–170; the sequence is SLLLFAFVSLAVLSVFSSLAL. The Extracellular portion of the chain corresponds to 171-178; sequence SKRPIQVS.

The protein belongs to the Casparian strip membrane proteins (CASP) family. In terms of assembly, homodimer and heterodimers.

It is found in the cell membrane. The protein is CASP-like protein 4D1 of Arabidopsis lyrata subsp. lyrata (Lyre-leaved rock-cress).